We begin with the raw amino-acid sequence, 276 residues long: Anamorsin homolog (276 aa).

Residues 1-152 (MEPYVVDNLN…TRGSSIKLPW (152 aa)) form an N-terminal SAM-like domain region. A linker region spans residues 152-189 (WAHSDIEAAWENVDNETSYDVDKNLINTNSLLQKSDYV). [2Fe-2S] cluster contacts are provided by Cys195, Cys211, Cys214, and Cys216. The fe-S binding site A stretch occupies residues 195-216 (CGQEFAKNSIGKRKRACKNCTC). Positions 237, 240, 248, and 251 each coordinate [4Fe-4S] cluster. 2 consecutive short sequence motifs (cx2C motif) follow at residues 237-240 (CGNC) and 248-251 (CSTC). The fe-S binding site B stretch occupies residues 237–251 (CGNCYLGDAFRCSTC).

The protein belongs to the anamorsin family. As to quaternary structure, monomer. [2Fe-2S] cluster serves as cofactor. The cofactor is [4Fe-4S] cluster.

It localises to the cytoplasm. The protein resides in the mitochondrion intermembrane space. Functionally, component of the cytosolic iron-sulfur (Fe-S) protein assembly (CIA) machinery. Required for the maturation of extramitochondrial Fe-S proteins. Part of an electron transfer chain functioning in an early step of cytosolic Fe-S biogenesis, facilitating the de novo assembly of a [4Fe-4S] cluster on the cytosolic Fe-S scaffold complex. Electrons are transferred from NADPH via a FAD- and FMN-containing diflavin oxidoreductase. Together with the diflavin oxidoreductase, also required for the assembly of the diferric tyrosyl radical cofactor of ribonucleotide reductase (RNR), probably by providing electrons for reduction during radical cofactor maturation in the catalytic small subunit. The chain is Anamorsin homolog from Schistosoma japonicum (Blood fluke).